The primary structure comprises 630 residues: Ankyrin repeat protein OPG025 (630 aa).

ANK repeat units follow at residues Asp-36–Ile-69, Asn-70–Ser-100, Asn-103–Ser-134, Met-174–His-210, Lys-338–Asn-367, and His-408–Ile-437.

This sequence belongs to the orthopoxvirus OPG025 family. In terms of assembly, interacts with components of host SCF complex CUL1 and SKP1 and components of the cullin deneddylation/COP9 signalosome complex subunits COPS7A and COPS7B.

Functionally, plays a role in the inhibition of host immune repsonse by counteracting the action of interferons on early events in the viral replication cycle. The protein is Ankyrin repeat protein OPG025 (OPG025) of Monkeypox virus.